The chain runs to 380 residues: Cytochrome b (380 aa).

Helical transmembrane passes span 34 to 54 (FGSL…LLAM), 78 to 99 (WLIR…YLHI), 114 to 134 (WNTG…GYVL), and 179 to 199 (FFAL…IHLT). Residues His-84 and His-98 each coordinate heme b. Heme b-binding residues include His-183 and His-197. His-202 is a binding site for a ubiquinone. The next 4 membrane-spanning stretches (helical) occupy residues 227 to 247 (TKDI…AMFA), 289 to 309 (LGGV…PFLH), 321 to 341 (LSQL…WIGS), and 348 to 368 (FIIT…ILFP).

It belongs to the cytochrome b family. In terms of assembly, the cytochrome bc1 complex contains 11 subunits: 3 respiratory subunits (MT-CYB, CYC1 and UQCRFS1), 2 core proteins (UQCRC1 and UQCRC2) and 6 low-molecular weight proteins (UQCRH/QCR6, UQCRB/QCR7, UQCRQ/QCR8, UQCR10/QCR9, UQCR11/QCR10 and a cleavage product of UQCRFS1). This cytochrome bc1 complex then forms a dimer. It depends on heme b as a cofactor.

Its subcellular location is the mitochondrion inner membrane. Functionally, component of the ubiquinol-cytochrome c reductase complex (complex III or cytochrome b-c1 complex) that is part of the mitochondrial respiratory chain. The b-c1 complex mediates electron transfer from ubiquinol to cytochrome c. Contributes to the generation of a proton gradient across the mitochondrial membrane that is then used for ATP synthesis. The chain is Cytochrome b (MT-CYB) from Aphanotriccus audax (Black-billed flycatcher).